We begin with the raw amino-acid sequence, 270 residues long: Putative carboxymethylenebutenolidase (270 aa).

Catalysis depends on residues Cys147, Asp204, and His236.

The protein belongs to the dienelactone hydrolase family.

It catalyses the reaction 2-(5-oxo-2,5-dihydrofuran-2-ylidene)acetate + H2O = 4-oxohex-2-enedioate + H(+). In Salmonella typhi, this protein is Putative carboxymethylenebutenolidase (ysgA).